The following is a 556-amino-acid chain: Dihydroxy-acid dehydratase (556 aa).

A Mg(2+)-binding site is contributed by D78. C119 lines the [2Fe-2S] cluster pocket. Residues D120 and K121 each contribute to the Mg(2+) site. An N6-carboxylysine modification is found at K121. Residue C191 participates in [2Fe-2S] cluster binding. Residue E442 coordinates Mg(2+). Catalysis depends on S468, which acts as the Proton acceptor.

This sequence belongs to the IlvD/Edd family. As to quaternary structure, homodimer. [2Fe-2S] cluster is required as a cofactor. Requires Mg(2+) as cofactor.

It carries out the reaction (2R)-2,3-dihydroxy-3-methylbutanoate = 3-methyl-2-oxobutanoate + H2O. It catalyses the reaction (2R,3R)-2,3-dihydroxy-3-methylpentanoate = (S)-3-methyl-2-oxopentanoate + H2O. It participates in amino-acid biosynthesis; L-isoleucine biosynthesis; L-isoleucine from 2-oxobutanoate: step 3/4. It functions in the pathway amino-acid biosynthesis; L-valine biosynthesis; L-valine from pyruvate: step 3/4. Functions in the biosynthesis of branched-chain amino acids. Catalyzes the dehydration of (2R,3R)-2,3-dihydroxy-3-methylpentanoate (2,3-dihydroxy-3-methylvalerate) into 2-oxo-3-methylpentanoate (2-oxo-3-methylvalerate) and of (2R)-2,3-dihydroxy-3-methylbutanoate (2,3-dihydroxyisovalerate) into 2-oxo-3-methylbutanoate (2-oxoisovalerate), the penultimate precursor to L-isoleucine and L-valine, respectively. In Clostridium beijerinckii (strain ATCC 51743 / NCIMB 8052) (Clostridium acetobutylicum), this protein is Dihydroxy-acid dehydratase.